We begin with the raw amino-acid sequence, 142 residues long: Hemoglobin subunit alpha-A (142 aa).

A Globin domain is found at 2-142 (VLSAADKTNV…VGAVLTAKYR (141 aa)). H59 provides a ligand contact to O2. H88 contacts heme b.

This sequence belongs to the globin family. As to quaternary structure, heterotetramer of two alpha chains and two beta chains. In terms of tissue distribution, red blood cells.

Functionally, involved in oxygen transport from the lung to the various peripheral tissues. This chain is Hemoglobin subunit alpha-A (HBAA), found in Mareca penelope (Eurasian wigeon).